The following is a 433-amino-acid chain: 3-phosphoshikimate 1-carboxyvinyltransferase (433 aa).

3-phosphoshikimate is bound by residues Lys-15, Ser-16, and Arg-20. Residue Lys-15 participates in phosphoenolpyruvate binding. The phosphoenolpyruvate site is built by Gly-96 and Arg-124. Ser-169, Gln-171, Ser-195, Asp-318, and Lys-345 together coordinate 3-phosphoshikimate. Gln-171 contributes to the phosphoenolpyruvate binding site. The Proton acceptor role is filled by Asp-318. Residues Arg-349 and Arg-393 each contribute to the phosphoenolpyruvate site.

The protein belongs to the EPSP synthase family. Monomer.

The protein resides in the cytoplasm. The catalysed reaction is 3-phosphoshikimate + phosphoenolpyruvate = 5-O-(1-carboxyvinyl)-3-phosphoshikimate + phosphate. It participates in metabolic intermediate biosynthesis; chorismate biosynthesis; chorismate from D-erythrose 4-phosphate and phosphoenolpyruvate: step 6/7. Its function is as follows. Catalyzes the transfer of the enolpyruvyl moiety of phosphoenolpyruvate (PEP) to the 5-hydroxyl of shikimate-3-phosphate (S3P) to produce enolpyruvyl shikimate-3-phosphate and inorganic phosphate. The protein is 3-phosphoshikimate 1-carboxyvinyltransferase of Pelodictyon phaeoclathratiforme (strain DSM 5477 / BU-1).